A 284-amino-acid chain; its full sequence is ATP phosphoribosyltransferase (284 aa).

It belongs to the ATP phosphoribosyltransferase family. Long subfamily. In terms of assembly, equilibrium between an active dimeric form, an inactive hexameric form and higher aggregates. Interconversion between the various forms is largely reversible and is influenced by the natural substrates and inhibitors of the enzyme. Mg(2+) is required as a cofactor.

Its subcellular location is the cytoplasm. It carries out the reaction 1-(5-phospho-beta-D-ribosyl)-ATP + diphosphate = 5-phospho-alpha-D-ribose 1-diphosphate + ATP. It participates in amino-acid biosynthesis; L-histidine biosynthesis; L-histidine from 5-phospho-alpha-D-ribose 1-diphosphate: step 1/9. Its activity is regulated as follows. Feedback inhibited by histidine. Functionally, catalyzes the condensation of ATP and 5-phosphoribose 1-diphosphate to form N'-(5'-phosphoribosyl)-ATP (PR-ATP). Has a crucial role in the pathway because the rate of histidine biosynthesis seems to be controlled primarily by regulation of HisG enzymatic activity. The protein is ATP phosphoribosyltransferase of Mycobacterium avium (strain 104).